Reading from the N-terminus, the 199-residue chain is Ribonuclease HI (199 aa).

The interval 1–68 (MPVVECDIQT…TAVVQPDRGG (68 aa)) is not required for RNase H activity. Residues 66 to 197 (RGGRVHAYFD…ADALANEALD (132 aa)) enclose the RNase H type-1 domain. An as active as intact RNase H region spans residues 69-199 (RVHAYFDGAS…ALANEALDDA (131 aa)). Mg(2+)-binding residues include D75, E115, D139, and D189. Positions 75, 115, 139, and 189 each coordinate Mn(2+).

It belongs to the RNase H family. The cofactor is Mn(2+). Requires Mg(2+) as cofactor. Co(2+) is required as a cofactor. It depends on Ni(2+) as a cofactor.

It is found in the cytoplasm. It catalyses the reaction Endonucleolytic cleavage to 5'-phosphomonoester.. In terms of biological role, nuclease that specifically degrades the RNA of RNA-DNA hybrids; seems to act exonucleolytically on RNA/DNA hybrids. Endonucleolytically removes RNA primers from the Okazaki fragments of lagging strand synthesis on its own. Complements the temperature-sensitive phenotype of an E.coli double rnhA/rnhB (RNase H) disruption mutant. This chain is Ribonuclease HI (rnhA), found in Halobacterium salinarum (strain ATCC 700922 / JCM 11081 / NRC-1) (Halobacterium halobium).